The following is a 21-amino-acid chain: Cyanophlyctin (21 aa).

As to expression, expressed by the skin glands.

The protein localises to the secreted. Functionally, has antibacterial activity against E.coli HP101BA (MIC=6.4 uM), K.pneumoniae PTCC1388 (MIC=7.3 uM), M.luteus PTCC1625 (MIC=4.7 uM) and S.aureus PTCC1431 (MIC=5.3 uM). Has no or very limited (&lt;3%) hemolytic activity at concentrations of 15 ug/ml and 60 ug/ml, respectively. This Euphlyctis cyanophlyctis (Skittering frog) protein is Cyanophlyctin.